Reading from the N-terminus, the 160-residue chain is Major strawberry allergen Fra a 1.04 (160 aa).

It belongs to the BetVI family. In terms of processing, phosphorylated in vivo. Phosphorylation prevents its activity as ribonuclease. As to expression, highly expressed in roots. Expressed a low levels in ripe red fruits.

In terms of biological role, possesses ribonuclease activity in vitro. This is Major strawberry allergen Fra a 1.04 from Fragaria ananassa (Strawberry).